Reading from the N-terminus, the 161-residue chain is Eukaryotic translation initiation factor 5A-1 (161 aa).

Residues 1–12 show a composition bias toward basic and acidic residues; it reads MSDEEHQFESKA. The segment at 1–21 is disordered; it reads MSDEEHQFESKADAGASKTYP. Lys-52 carries the hypusine modification.

Belongs to the eIF-5A family. Lys-52 undergoes hypusination, a unique post-translational modification that consists in the addition of a butylamino group from spermidine to lysine side chain, leading to the formation of the unusual amino acid hypusine. eIF-5As are the only known proteins to undergo this modification, which is essential for their function.

Its function is as follows. Translation factor that promotes translation elongation and termination, particularly upon ribosome stalling at specific amino acid sequence contexts. Binds between the exit (E) and peptidyl (P) site of the ribosome and promotes rescue of stalled ribosome: specifically required for efficient translation of polyproline-containing peptides as well as other motifs that stall the ribosome. Acts as a ribosome quality control (RQC) cofactor by joining the RQC complex to facilitate peptidyl transfer during CAT tailing step. This Medicago sativa (Alfalfa) protein is Eukaryotic translation initiation factor 5A-1.